We begin with the raw amino-acid sequence, 271 residues long: Auxin-responsive protein IAA5 (271 aa).

Residues 1 to 96 (MSPPLEPHDY…RHGASSGSVA (96 aa)) form a disordered region. 2 stretches are compositionally biased toward low complexity: residues 14-33 (SAAAASPTPSSSSCSSSPNP) and 40-50 (PRLTLRLGLPG). Positions 44 to 48 (LRLGL) match the EAR-like (transcriptional repression) motif. Residues 151–255 (PLYVKVSMDG…RKLKIMRGSD (105 aa)) form the PB1 domain.

It belongs to the Aux/IAA family. In terms of assembly, homodimers and heterodimers.

The protein localises to the nucleus. Functionally, aux/IAA proteins are short-lived transcriptional factors that function as repressors of early auxin response genes at low auxin concentrations. This Oryza sativa subsp. japonica (Rice) protein is Auxin-responsive protein IAA5 (IAA5).